A 122-amino-acid polypeptide reads, in one-letter code: Serum amyloid A-1 protein (122 aa).

The N-terminal stretch at 1-19 (MKLLSGLLLCSLVLGVSSQ) is a signal peptide. An important for amyloid formation region spans residues 20-45 (RWFSFIGEATQGAWDMWRAYSDMREA). The interval 87–122 (MGHGAEDSMADQAANEWGRSGKDPNHFRPKGLPDKY) is disordered. The segment covering 105–122 (RSGKDPNHFRPKGLPDKY) has biased composition (basic and acidic residues).

Belongs to the SAA family. Homohexamer; dimer of trimers. Can form amyloid fibrils after partial proteolysis; the native, undenatured protein does not form amyloid fibrils (in vitro). Apolipoprotein of the HDL complex. Binds to heparin. As to expression, detected in liver.

Its subcellular location is the secreted. Major acute phase protein. This is Serum amyloid A-1 protein (SAA1) from Oryctolagus cuniculus (Rabbit).